The chain runs to 31 residues: MEALVYVFLLTGTLMVIFFAIFFREPPRIAK.

Residues 3–23 (ALVYVFLLTGTLMVIFFAIFF) form a helical membrane-spanning segment.

This sequence belongs to the PsbT family. PSII is composed of 1 copy each of membrane proteins PsbA, PsbB, PsbC, PsbD, PsbE, PsbF, PsbH, PsbI, PsbJ, PsbK, PsbL, PsbM, PsbT, PsbX, PsbY, PsbZ, Psb30/Ycf12, at least 3 peripheral proteins of the oxygen-evolving complex and a large number of cofactors. It forms dimeric complexes.

It localises to the plastid. Its subcellular location is the chloroplast thylakoid membrane. In terms of biological role, found at the monomer-monomer interface of the photosystem II (PS II) dimer, plays a role in assembly and dimerization of PSII. PSII is a light-driven water plastoquinone oxidoreductase, using light energy to abstract electrons from H(2)O, generating a proton gradient subsequently used for ATP formation. In Pyropia yezoensis (Susabi-nori), this protein is Photosystem II reaction center protein T.